Here is a 424-residue protein sequence, read N- to C-terminus: Probable methyltransferase EP424R (424 aa).

The Adrift-type SAM-dependent 2'-O-MTase domain maps to 104–316 (QIVTNAWLKM…TYIVGKNRLR (213 aa)). S-adenosyl-L-methionine-binding residues include Gly136 and Asp229. The active-site Proton acceptor is Lys269.

The protein localises to the virion. This chain is Probable methyltransferase EP424R, found in African swine fever virus (strain Badajoz 1971 Vero-adapted) (Ba71V).